The following is a 250-amino-acid chain: Ubiquinone/menaquinone biosynthesis C-methyltransferase UbiE (250 aa).

Residues T74, D94, 122–123 (DA), and S139 contribute to the S-adenosyl-L-methionine site.

Belongs to the class I-like SAM-binding methyltransferase superfamily. MenG/UbiE family.

It catalyses the reaction a 2-demethylmenaquinol + S-adenosyl-L-methionine = a menaquinol + S-adenosyl-L-homocysteine + H(+). The enzyme catalyses a 2-methoxy-6-(all-trans-polyprenyl)benzene-1,4-diol + S-adenosyl-L-methionine = a 5-methoxy-2-methyl-3-(all-trans-polyprenyl)benzene-1,4-diol + S-adenosyl-L-homocysteine + H(+). It participates in quinol/quinone metabolism; menaquinone biosynthesis; menaquinol from 1,4-dihydroxy-2-naphthoate: step 2/2. The protein operates within cofactor biosynthesis; ubiquinone biosynthesis. Functionally, methyltransferase required for the conversion of demethylmenaquinol (DMKH2) to menaquinol (MKH2) and the conversion of 2-polyprenyl-6-methoxy-1,4-benzoquinol (DDMQH2) to 2-polyprenyl-3-methyl-6-methoxy-1,4-benzoquinol (DMQH2). The sequence is that of Ubiquinone/menaquinone biosynthesis C-methyltransferase UbiE from Dinoroseobacter shibae (strain DSM 16493 / NCIMB 14021 / DFL 12).